The sequence spans 923 residues: Glucosidase 2 subunit alpha (923 aa).

An N-terminal signal peptide occupies residues 1 to 25; that stretch reads MRYHGICWFIFQAAIIFAIFGSCQG. N-linked (GlcNAc...) asparagine glycosylation occurs at Asn-262. Catalysis depends on Asp-524, which acts as the Nucleophile. Glu-527 is a catalytic residue. Residue Asn-563 is glycosylated (N-linked (GlcNAc...) asparagine). The Proton donor role is filled by Asp-600. Asn-822 carries N-linked (GlcNAc...) asparagine glycosylation.

Belongs to the glycosyl hydrolase 31 family. In terms of assembly, heterodimer of a catalytic subunit alpha (gls2) and a subunit beta (gtb1).

It is found in the endoplasmic reticulum. The enzyme catalyses N(4)-(alpha-D-Glc-(1-&gt;3)-alpha-D-Man-(1-&gt;2)-alpha-D-Man-(1-&gt;2)-alpha-D-Man-(1-&gt;3)-[alpha-D-Man-(1-&gt;2)-alpha-D-Man-(1-&gt;3)-[alpha-D-Man-(1-&gt;2)-alpha-D-Man-(1-&gt;6)]-alpha-D-Man-(1-&gt;6)]-beta-D-Man-(1-&gt;4)-beta-D-GlcNAc-(1-&gt;4)-beta-D-GlcNAc)-L-asparaginyl-[protein] + H2O = N(4)-(alpha-D-Man-(1-&gt;2)-alpha-D-Man-(1-&gt;2)-alpha-D-Man-(1-&gt;3)-[alpha-D-Man-(1-&gt;2)-alpha-D-Man-(1-&gt;3)-[alpha-D-Man-(1-&gt;2)-alpha-D-Man-(1-&gt;6)]-alpha-D-Man-(1-&gt;6)]-beta-D-Man-(1-&gt;4)-beta-D-GlcNAc-(1-&gt;4)-beta-D-GlcNAc)-L-asparaginyl-[protein] (N-glucan mannose isomer 9A1,2,3B1,2,3) + beta-D-glucose. The catalysed reaction is N(4)-(alpha-D-Glc-(1-&gt;3)-alpha-D-Glc-(1-&gt;3)-alpha-D-Man-(1-&gt;2)-alpha-D-Man-(1-&gt;2)-alpha-D-Man-(1-&gt;3)-[alpha-D-Man-(1-&gt;2)-alpha-D-Man-(1-&gt;3)-[alpha-D-Man-(1-&gt;2)-alpha-D-Man-(1-&gt;6)]-alpha-D-Man-(1-&gt;6)]-beta-D-Man-(1-&gt;4)-beta-D-GlcNAc-(1-&gt;4)-beta-D-GlcNAc)-L-asparaginyl-[protein] + H2O = N(4)-(alpha-D-Glc-(1-&gt;3)-alpha-D-Man-(1-&gt;2)-alpha-D-Man-(1-&gt;2)-alpha-D-Man-(1-&gt;3)-[alpha-D-Man-(1-&gt;2)-alpha-D-Man-(1-&gt;3)-[alpha-D-Man-(1-&gt;2)-alpha-D-Man-(1-&gt;6)]-alpha-D-Man-(1-&gt;6)]-beta-D-Man-(1-&gt;4)-beta-D-GlcNAc-(1-&gt;4)-beta-D-GlcNAc)-L-asparaginyl-[protein] + beta-D-glucose. It functions in the pathway glycan metabolism; N-glycan metabolism. Functionally, catalytic subunit of glucosidase 2, which cleaves sequentially the 2 innermost alpha-1,3-linked glucose residues from the Glc(2)Man(9)GlcNAc(2) oligosaccharide precursor of immature glycoproteins. The protein is Glucosidase 2 subunit alpha of Schizosaccharomyces pombe (strain 972 / ATCC 24843) (Fission yeast).